Here is a 227-residue protein sequence, read N- to C-terminus: Cytochrome c oxidase subunit 2 (227 aa).

The Mitochondrial intermembrane segment spans residues 1–14; that stretch reads MAYPLQLGFQDATS. The helical transmembrane segment at 15 to 45 threads the bilayer; it reads PVMEELLHFHDHTLMIIFLISSLVLYIIMLM. Topologically, residues 46–59 are mitochondrial matrix; sequence LTTKLVHTNMMNVQ. Residues 60 to 87 traverse the membrane as a helical segment; the sequence is EMEMIWTILPAIILILIALPSLHTLYMM. Residues 88-227 lie on the Mitochondrial intermembrane side of the membrane; the sequence is DEINNPLLTI…YFESWSASLA (140 aa). Cu cation contacts are provided by His161, Cys196, Glu198, Cys200, His204, and Met207. Mg(2+) is bound at residue Glu198. At Tyr218 the chain carries Phosphotyrosine.

It belongs to the cytochrome c oxidase subunit 2 family. In terms of assembly, component of the cytochrome c oxidase (complex IV, CIV), a multisubunit enzyme composed of 14 subunits. The complex is composed of a catalytic core of 3 subunits MT-CO1, MT-CO2 and MT-CO3, encoded in the mitochondrial DNA, and 11 supernumerary subunits COX4I, COX5A, COX5B, COX6A, COX6B, COX6C, COX7A, COX7B, COX7C, COX8 and NDUFA4, which are encoded in the nuclear genome. The complex exists as a monomer or a dimer and forms supercomplexes (SCs) in the inner mitochondrial membrane with NADH-ubiquinone oxidoreductase (complex I, CI) and ubiquinol-cytochrome c oxidoreductase (cytochrome b-c1 complex, complex III, CIII), resulting in different assemblies (supercomplex SCI(1)III(2)IV(1) and megacomplex MCI(2)III(2)IV(2)). Found in a complex with TMEM177, COA6, COX18, COX20, SCO1 and SCO2. Interacts with TMEM177 in a COX20-dependent manner. Interacts with COX20. Interacts with COX16. Requires Cu cation as cofactor.

The protein localises to the mitochondrion inner membrane. The catalysed reaction is 4 Fe(II)-[cytochrome c] + O2 + 8 H(+)(in) = 4 Fe(III)-[cytochrome c] + 2 H2O + 4 H(+)(out). Its function is as follows. Component of the cytochrome c oxidase, the last enzyme in the mitochondrial electron transport chain which drives oxidative phosphorylation. The respiratory chain contains 3 multisubunit complexes succinate dehydrogenase (complex II, CII), ubiquinol-cytochrome c oxidoreductase (cytochrome b-c1 complex, complex III, CIII) and cytochrome c oxidase (complex IV, CIV), that cooperate to transfer electrons derived from NADH and succinate to molecular oxygen, creating an electrochemical gradient over the inner membrane that drives transmembrane transport and the ATP synthase. Cytochrome c oxidase is the component of the respiratory chain that catalyzes the reduction of oxygen to water. Electrons originating from reduced cytochrome c in the intermembrane space (IMS) are transferred via the dinuclear copper A center (CU(A)) of subunit 2 and heme A of subunit 1 to the active site in subunit 1, a binuclear center (BNC) formed by heme A3 and copper B (CU(B)). The BNC reduces molecular oxygen to 2 water molecules using 4 electrons from cytochrome c in the IMS and 4 protons from the mitochondrial matrix. This is Cytochrome c oxidase subunit 2 (MT-CO2) from Mammuthus primigenius (Siberian woolly mammoth).